We begin with the raw amino-acid sequence, 288 residues long: MHQSTLLKPVSCYGIGVHTGKRTQLTIEPAKENTGIIFIRTDISSENNYIEASYCNVSDTLLSTTISNNHKIQISTIEHLMAALWGCSIDNAIIKIDGPEVPIMDGSSKPFVFMIECAGKKLQNAPKKYLKILKEVKVVNKDCELYCTPSEHMAVDLTIDFSSKAIGRQNLSFGMQESFTKNIADARTFGFIRDVEYLKSKGLAQGASFENAIGIDEHDKVLNPSGLRYADEFVRHKLLDLFGDLYTSGISVVSAIKGYKTSHAFNNELLHKIFSDTTSYKFVTSNEL.

Zn(2+) is bound by residues H79, H236, and D240. H263 serves as the catalytic Proton donor.

Belongs to the LpxC family. The cofactor is Zn(2+).

It carries out the reaction a UDP-3-O-[(3R)-3-hydroxyacyl]-N-acetyl-alpha-D-glucosamine + H2O = a UDP-3-O-[(3R)-3-hydroxyacyl]-alpha-D-glucosamine + acetate. The protein operates within glycolipid biosynthesis; lipid IV(A) biosynthesis; lipid IV(A) from (3R)-3-hydroxytetradecanoyl-[acyl-carrier-protein] and UDP-N-acetyl-alpha-D-glucosamine: step 2/6. In terms of biological role, catalyzes the hydrolysis of UDP-3-O-myristoyl-N-acetylglucosamine to form UDP-3-O-myristoylglucosamine and acetate, the committed step in lipid A biosynthesis. The protein is UDP-3-O-acyl-N-acetylglucosamine deacetylase of Rickettsia prowazekii (strain Madrid E).